We begin with the raw amino-acid sequence, 650 residues long: Serine/threonine-protein phosphatase with EF-hands 1 (650 aa).

Positions 16-45 (VIKAALVIQNWYRRYRARLRVRQHYALAIF) constitute an IQ domain. The segment at 124 to 456 (IHILLQAFKQ…PQFFQYQVTS (333 aa)) is catalytic. Residues Asp175, His177, Asp204, and Asn236 each contribute to the Mn(2+) site. The active-site Proton donor is the His237. His288 provides a ligand contact to Mn(2+). Positions 315-348 (PVLGNQETGEKRNKSASNYVEPRKVEPDKTPSED) are disordered. Positions 335-348 (EPRKVEPDKTPSED) are enriched in basic and acidic residues. His404 serves as a coordination point for Mn(2+). 3 consecutive EF-hand domains span residues 484–519 (SRKT…ILGL), 567–602 (RYRS…FNAH), and 607–642 (IDDS…VHKY). Ca(2+) contacts are provided by Asp497, Ser499, Ser501, Arg503, Glu508, Asp580, Asp582, Ser584, Glu591, Asp620, Asn622, Asp624, Asn626, and Glu631.

It belongs to the PPP phosphatase family. Mn(2+) is required as a cofactor. Mg(2+) serves as cofactor. As to expression, in the embryo it is almost exclusively expressed in the peripheral nervous system, within sensory neurons of cranial and dorsal root ganglia. Otherwise found in fetal inner ear and a small group of neurons in the midbrain/pons junction.

The enzyme catalyses O-phospho-L-seryl-[protein] + H2O = L-seryl-[protein] + phosphate. It catalyses the reaction O-phospho-L-threonyl-[protein] + H2O = L-threonyl-[protein] + phosphate. Activated by calcium. Functionally, may have a role in the recovery or adaptation response of photoreceptors. May have a role in diverse sensory neurons and in development. This is Serine/threonine-protein phosphatase with EF-hands 1 (Ppef1) from Mus musculus (Mouse).